The chain runs to 365 residues: Chorismate synthase (365 aa).

Position 46 (arginine 46) interacts with NADP(+). FMN-binding positions include 123–125 (RSS), 241–242 (NG), glycine 281, 296–300 (KPTPS), and arginine 322.

It belongs to the chorismate synthase family. In terms of assembly, homotetramer. Requires FMNH2 as cofactor.

The enzyme catalyses 5-O-(1-carboxyvinyl)-3-phosphoshikimate = chorismate + phosphate. It functions in the pathway metabolic intermediate biosynthesis; chorismate biosynthesis; chorismate from D-erythrose 4-phosphate and phosphoenolpyruvate: step 7/7. Catalyzes the anti-1,4-elimination of the C-3 phosphate and the C-6 proR hydrogen from 5-enolpyruvylshikimate-3-phosphate (EPSP) to yield chorismate, which is the branch point compound that serves as the starting substrate for the three terminal pathways of aromatic amino acid biosynthesis. This reaction introduces a second double bond into the aromatic ring system. The protein is Chorismate synthase of Helicobacter pylori (strain HPAG1).